The sequence spans 598 residues: NADH-ubiquinone oxidoreductase chain 5 (598 aa).

14 helical membrane passes run 6 to 26 (LTLI…PPII), 32 to 52 (MILT…PLTI), 84 to 100 (YTVI…WSIM), 113 to 133 (MDKF…FISA), 136 to 156 (LLQL…LISW), 241 to 261 (TPVS…FLLI), 272 to 292 (LMLE…ALCA), 301 to 320 (IIAF…VGLN), 325 to 347 (AFLH…GSII), 370 to 390 (TTCM…AGFF), 409 to 429 (LMVT…LIIM), 456 to 476 (LAWG…PMKP), 478 to 498 (IFTM…ISLI), and 576 to 596 (LNSA…LSLT).

Belongs to the complex I subunit 5 family.

It is found in the mitochondrion inner membrane. The catalysed reaction is a ubiquinone + NADH + 5 H(+)(in) = a ubiquinol + NAD(+) + 4 H(+)(out). Its function is as follows. Core subunit of the mitochondrial membrane respiratory chain NADH dehydrogenase (Complex I) that is believed to belong to the minimal assembly required for catalysis. Complex I functions in the transfer of electrons from NADH to the respiratory chain. The immediate electron acceptor for the enzyme is believed to be ubiquinone. The sequence is that of NADH-ubiquinone oxidoreductase chain 5 (MT-ND5) from Petromyzon marinus (Sea lamprey).